Here is a 230-residue protein sequence, read N- to C-terminus: Ribonuclease 3 (230 aa).

In terms of domain architecture, RNase III spans 5-125 (YSRFYNILGY…VIGAIYLDSD (121 aa)). E40 is a Mg(2+) binding site. Residue D44 is part of the active site. D111 and E114 together coordinate Mg(2+). The active site involves E114. Residues 153 to 223 (DSKSKLQEIL…AEKMIEMLSQ (71 aa)) enclose the DRBM domain.

Belongs to the ribonuclease III family. Homodimer. The cofactor is Mg(2+).

The protein localises to the cytoplasm. It carries out the reaction Endonucleolytic cleavage to 5'-phosphomonoester.. Its function is as follows. Digests double-stranded RNA. Involved in the processing of primary rRNA transcript to yield the immediate precursors to the large and small rRNAs (23S and 16S). Also processes some mRNAs, and tRNAs when they are encoded in the rRNA operon. Functionally, CRISPR (clustered regularly interspaced short palindromic repeat) is an adaptive immune system that provides protection against mobile genetic elements (viruses, transposable elements and conjugative plasmids). CRISPR clusters contain spacers, sequences complementary to antecedent mobile elements, and target invading nucleic acids. CRISPR clusters are transcribed and processed into CRISPR RNA (crRNA). In this organism endogenous ribonuclease 3 and Cas9 are required for correct coprocessing of pre-crRNA and the trans-encoded small RNA (tracrRNA). Cas9, crRNA and tracrRNA are required for cleavage of invading DNA. Complements pre-crRNA and tracrRNA coprocessing defects in an rnc deletion in S.pyogenes strain 370. The sequence is that of Ribonuclease 3 from Francisella tularensis subsp. novicida (strain U112).